The sequence spans 103 residues: Large ribosomal subunit protein bL21 (103 aa).

This sequence belongs to the bacterial ribosomal protein bL21 family. In terms of assembly, part of the 50S ribosomal subunit. Contacts protein L20.

Its function is as follows. This protein binds to 23S rRNA in the presence of protein L20. The chain is Large ribosomal subunit protein bL21 from Shewanella sp. (strain ANA-3).